A 354-amino-acid polypeptide reads, in one-letter code: Stearoyl-CoA desaturase (354 aa).

The interval 1 to 28 is disordered; that stretch reads MPGHLLQEEMTSSYTTTTTTITEPPSES. At 1 to 67 the chain is on the cytoplasmic side; sequence MPGHLLQEEM…EGPPPKLEYV (67 aa). The segment covering 8–28 has biased composition (low complexity); it reads EEMTSSYTTTTTTITEPPSES. The helical transmembrane segment at 68-88 threads the bilayer; it reads WRNIILMALLHLGALYGLVLV. Residue N70 coordinates substrate. Residues 89–92 lie on the Lumenal side of the membrane; that stretch reads PSSK. The chain crosses the membrane as a helical span at residues 93-113; sequence VYTLLWAFVYYVISIEGIGAG. Residues 114–212 lie on the Cytoplasmic side of the membrane; it reads VHRLWSHRTY…EKLVMFQRRY (99 aa). Residues H115 and H120 each coordinate Fe cation. The short motif at 115–120 is the Histidine box-1 element; sequence HRLWSH. 3 residues coordinate substrate: N143, R150, and D151. Fe cation-binding residues include H152, H155, and H156. A Histidine box-2 motif is present at residues 152 to 156; it reads HRAHH. R183 and K184 together coordinate substrate. The residue at position 198 (S198) is a Phosphoserine. A helical transmembrane segment spans residues 213–232; it reads YKPAILLMCFILPTFVPWYF. Residues 233–236 lie on the Lumenal side of the membrane; that stretch reads WGEA. Residues 237 to 258 form a helical membrane-spanning segment; sequence FVNSLCVSTFLRYTLVLNATWL. A substrate-binding site is contributed by W257. Residues 259–354 are Cytoplasmic-facing; it reads VNSAAHLYGY…RTGDGSCKSG (96 aa). Positions 264, 293, 296, and 297 each coordinate Fe cation. A Histidine box-3 motif is present at residues 293-297; the sequence is HNYHH.

This sequence belongs to the fatty acid desaturase type 1 family. Fe(2+) serves as cofactor.

It localises to the endoplasmic reticulum membrane. The enzyme catalyses octadecanoyl-CoA + 2 Fe(II)-[cytochrome b5] + O2 + 2 H(+) = (9Z)-octadecenoyl-CoA + 2 Fe(III)-[cytochrome b5] + 2 H2O. The catalysed reaction is hexadecanoyl-CoA + 2 Fe(II)-[cytochrome b5] + O2 + 2 H(+) = (9Z)-hexadecenoyl-CoA + 2 Fe(III)-[cytochrome b5] + 2 H2O. In terms of biological role, stearoyl-CoA desaturase that utilizes O(2) and electrons from reduced cytochrome b5 to introduce the first double bond into saturated fatty acyl-CoA substrates. Catalyzes the insertion of a cis double bond at the delta-9 position into fatty acyl-CoA substrates including palmitoyl-CoA and stearoyl-CoA. Gives rise to a mixture of 16:1 and 18:1 unsaturated fatty acids. Plays an important role in lipid biosynthesis. Plays an important role in regulating the expression of genes that are involved in lipogenesis and in regulating mitochondrial fatty acid oxidation. Plays an important role in body energy homeostasis. Contributes to the biosynthesis of membrane phospholipids, cholesterol esters and triglycerides. The chain is Stearoyl-CoA desaturase (SCD) from Mesocricetus auratus (Golden hamster).